Reading from the N-terminus, the 1273-residue chain is Ribulose bisphosphate carboxylase small subunit, chloroplastic (1273 aa).

A chloroplast-targeting transit peptide spans 1-134; it reads MPFDRQPLLS…AVLPFTSEKD (134 aa). Propeptides lie at residues 269–278, 412–421, 556–565, 699–708, 844–853, 987–996, and 1131–1140; these read GMAAMTGEKD and GMAAMTGEKE.

This sequence belongs to the RuBisCO small chain family. As to quaternary structure, heterohexadecamer of 8 large and 8 small subunits. Eight small subunits are processed from a large polyprotein. All start with the same sequence but there is more heterogeneity at the C-terminus.

The protein resides in the plastid. It localises to the chloroplast. RuBisCO catalyzes two reactions: the carboxylation of D-ribulose 1,5-bisphosphate, the primary event in carbon dioxide fixation, as well as the oxidative fragmentation of the pentose substrate. Both reactions occur simultaneously and in competition at the same active site. Although the small subunit is not catalytic it is essential for maximal activity. This Euglena gracilis protein is Ribulose bisphosphate carboxylase small subunit, chloroplastic.